Here is a 115-residue protein sequence, read N- to C-terminus: Large ribosomal subunit protein P2z (115 aa).

The disordered stretch occupies residues 62–115 (LASVPSGGGGGVAVASATSGGGGGGGAPAAESKKEEKKEEKEESDDDMGFSLFE). Residues 92–102 (ESKKEEKKEEK) are compositionally biased toward basic and acidic residues. At Ser-105 the chain carries Phosphoserine.

This sequence belongs to the eukaryotic ribosomal protein P1/P2 family. As to quaternary structure, P1 and P2 exist as dimers at the large ribosomal subunit. In terms of processing, phosphorylated.

In terms of biological role, plays an important role in the elongation step of protein synthesis. The sequence is that of Large ribosomal subunit protein P2z (RPP2A) from Arabidopsis thaliana (Mouse-ear cress).